A 328-amino-acid chain; its full sequence is Probable nicotianamine synthase 6 (328 aa).

This sequence belongs to the nicotianamine synthase (NAS)-like family.

It catalyses the reaction 3 S-adenosyl-L-methionine = nicotianamine + 3 S-methyl-5'-thioadenosine + 3 H(+). In terms of biological role, synthesizes nicotianamine, a polyamine that is the first intermediate in the synthesis of the phytosiderophores of the mugineic acid type found in gramineae which serves as a sensor for the physiological iron status within the plant, and/or might be involved in the transport of iron. This chain is Probable nicotianamine synthase 6 (NAS6), found in Hordeum vulgare (Barley).